Reading from the N-terminus, the 123-residue chain is Small ribosomal subunit protein uS12 (123 aa).

D89 carries the post-translational modification 3-methylthioaspartic acid.

Belongs to the universal ribosomal protein uS12 family. As to quaternary structure, part of the 30S ribosomal subunit. Contacts proteins S8 and S17. May interact with IF1 in the 30S initiation complex.

Its function is as follows. With S4 and S5 plays an important role in translational accuracy. Interacts with and stabilizes bases of the 16S rRNA that are involved in tRNA selection in the A site and with the mRNA backbone. Located at the interface of the 30S and 50S subunits, it traverses the body of the 30S subunit contacting proteins on the other side and probably holding the rRNA structure together. The combined cluster of proteins S8, S12 and S17 appears to hold together the shoulder and platform of the 30S subunit. The sequence is that of Small ribosomal subunit protein uS12 from Rhizobium etli (strain ATCC 51251 / DSM 11541 / JCM 21823 / NBRC 15573 / CFN 42).